A 416-amino-acid chain; its full sequence is Actin-like protein 9 (416 aa).

A disordered region spans residues 1–23; the sequence is MDPNQGNPLEPQDSPEIPKPSLN.

It belongs to the actin family. Interacts with ACTL7A.

Its subcellular location is the cytoplasmic vesicle. It localises to the secretory vesicle. It is found in the acrosome. The protein localises to the cytoplasm. The protein resides in the cytoskeleton. Its subcellular location is the perinuclear theca. Functionally, testis-specic protein that plays an important role in fusion of proacrosomal vesicles and perinuclear theca formation. The sequence is that of Actin-like protein 9 (ACTL9) from Bos taurus (Bovine).